Here is a 614-residue protein sequence, read N- to C-terminus: Cathepsin F (614 aa).

The N-terminal stretch at 1–20 is a signal peptide; sequence MRLFAAATVALVLLLGQAAG. A propeptide spans 21 to 393 (activation peptide); the sequence is EELAEERAGQ…AAVVPAYHGE (373 aa). The tract at residues 25–50 is disordered; sequence EERAGQAQGDAESTESSETTTDQAVS. Positions 29-45 are enriched in low complexity; it reads GQAQGDAESTESSETTT. Residue N151 is glycosylated (N-linked (GlcNAc...) asparagine). 2 disulfides stabilise this stretch: C415-C456 and C449-C489. Residue C418 is part of the active site. 2 N-linked (GlcNAc...) asparagine glycosylation sites follow: N492 and N510. C548 and C602 form a disulfide bridge. Active-site residues include H555 and N581.

It belongs to the peptidase C1 family.

It carries out the reaction The recombinant enzyme cleaves synthetic substrates with Phe and Leu (better than Val) in P2, with high specificity constant (kcat/Km) comparable to that of cathepsin L.. May have a role in autophagic cell death. This Drosophila melanogaster (Fruit fly) protein is Cathepsin F.